A 330-amino-acid chain; its full sequence is tRNA-modifying protein YgfZ (330 aa).

Residues Trp-28 and Trp-190 each contribute to the folate site.

It belongs to the tRNA-modifying YgfZ family.

Its subcellular location is the cytoplasm. In terms of biological role, folate-binding protein involved in regulating the level of ATP-DnaA and in the modification of some tRNAs. It is probably a key factor in regulatory networks that act via tRNA modification, such as initiation of chromosomal replication. In Yersinia pseudotuberculosis serotype IB (strain PB1/+), this protein is tRNA-modifying protein YgfZ.